The chain runs to 287 residues: ATP synthase gamma chain (287 aa).

Belongs to the ATPase gamma chain family. In terms of assembly, F-type ATPases have 2 components, CF(1) - the catalytic core - and CF(0) - the membrane proton channel. CF(1) has five subunits: alpha(3), beta(3), gamma(1), delta(1), epsilon(1). CF(0) has three main subunits: a, b and c.

It is found in the cell inner membrane. In terms of biological role, produces ATP from ADP in the presence of a proton gradient across the membrane. The gamma chain is believed to be important in regulating ATPase activity and the flow of protons through the CF(0) complex. The chain is ATP synthase gamma chain from Shigella sonnei (strain Ss046).